A 178-amino-acid polypeptide reads, in one-letter code: Putative pre-16S rRNA nuclease (178 aa).

2 stretches are compositionally biased toward basic and acidic residues: residues 1-18 (MDHA…DPGR) and 50-60 (PRSKDRGPDAP). Disordered regions lie at residues 1-23 (MDHA…RRIG) and 36-60 (SDPD…PDAP).

Belongs to the YqgF nuclease family.

Its subcellular location is the cytoplasm. Its function is as follows. Could be a nuclease involved in processing of the 5'-end of pre-16S rRNA. In Rhodococcus opacus (strain B4), this protein is Putative pre-16S rRNA nuclease.